The following is a 1241-amino-acid chain: ATP-dependent helicase/nuclease subunit A (1241 aa).

Positions 12–485 (SQWTDDQWKA…IDLAKNFRSR (474 aa)) constitute a UvrD-like helicase ATP-binding domain. 33–40 (AAAGSGKT) is a binding site for ATP. Residues 505 to 805 (GEIDYDADAE…RIMTIHKSKG (301 aa)) enclose the UvrD-like helicase C-terminal domain.

It belongs to the helicase family. AddA subfamily. In terms of assembly, heterodimer of AddA and AddB/RexB. Mg(2+) serves as cofactor.

The enzyme catalyses Couples ATP hydrolysis with the unwinding of duplex DNA by translocating in the 3'-5' direction.. The catalysed reaction is ATP + H2O = ADP + phosphate + H(+). Its function is as follows. The heterodimer acts as both an ATP-dependent DNA helicase and an ATP-dependent, dual-direction single-stranded exonuclease. Recognizes the chi site generating a DNA molecule suitable for the initiation of homologous recombination. The AddA nuclease domain is required for chi fragment generation; this subunit has the helicase and 3' -&gt; 5' nuclease activities. This is ATP-dependent helicase/nuclease subunit A from Bacillus cereus (strain ZK / E33L).